The chain runs to 273 residues: Transmembrane epididymal protein 1 (273 aa).

6 consecutive transmembrane segments (helical) span residues 34–54, 72–92, 96–116, 129–149, 158–178, and 195–215; these read IVTG…GMVL, LTMF…KNVL, CVGL…LLMV, VYSL…AELW, LMET…GFIL, and IMFV…FLLG.

Belongs to the TMEM45 family.

It localises to the membrane. This chain is Transmembrane epididymal protein 1 (TEDDM1), found in Homo sapiens (Human).